Reading from the N-terminus, the 116-residue chain is Integration host factor subunit alpha (116 aa).

Disordered regions lie at residues 58–80 (FGNF…GETI) and 94–116 (QKLK…EAAE). A compositionally biased stretch (polar residues) spans 94-105 (QKLKSTVEQSGN).

This sequence belongs to the bacterial histone-like protein family. In terms of assembly, heterodimer of an alpha and a beta chain.

Its function is as follows. This protein is one of the two subunits of integration host factor, a specific DNA-binding protein that functions in genetic recombination as well as in transcriptional and translational control. The sequence is that of Integration host factor subunit alpha from Bordetella avium (strain 197N).